We begin with the raw amino-acid sequence, 194 residues long: Ribonuclease HII (194 aa).

The RNase H type-2 domain occupies 3–193 (ILTAGVDEAG…VRNLLAQQAL (191 aa)). Asp9, Glu10, and Asp101 together coordinate a divalent metal cation.

The protein belongs to the RNase HII family. Requires Mn(2+) as cofactor. Mg(2+) serves as cofactor.

It localises to the cytoplasm. It catalyses the reaction Endonucleolytic cleavage to 5'-phosphomonoester.. Its function is as follows. Endonuclease that specifically degrades the RNA of RNA-DNA hybrids. The chain is Ribonuclease HII from Neisseria gonorrhoeae (strain ATCC 700825 / FA 1090).